A 264-amino-acid polypeptide reads, in one-letter code: Glutamate racemase (264 aa).

Residues D10–S11 and Y42–G43 contribute to the substrate site. C73 acts as the Proton donor/acceptor in catalysis. Residue N74–T75 coordinates substrate. The Proton donor/acceptor role is filled by C183. T184 to H185 provides a ligand contact to substrate.

This sequence belongs to the aspartate/glutamate racemases family.

It catalyses the reaction L-glutamate = D-glutamate. It participates in cell wall biogenesis; peptidoglycan biosynthesis. In terms of biological role, provides the (R)-glutamate required for cell wall biosynthesis. The protein is Glutamate racemase of Streptococcus pyogenes serotype M6 (strain ATCC BAA-946 / MGAS10394).